We begin with the raw amino-acid sequence, 341 residues long: NADH-ubiquinone oxidoreductase chain 2 (341 aa).

9 helical membrane-spanning segments follow: residues 8–28 (IFLI…SWLG), 61–81 (FLTQ…LMFL), 95–115 (ILIL…FWFP), 145–165 (FIYN…SLGG), 174–191 (LMAF…LAMM), 195–215 (MLWM…VLMF), 238–258 (LLIF…GFLP), 272–292 (LFIL…YLRL), and 321–341 (LIFN…YIIM).

The protein belongs to the complex I subunit 2 family.

It localises to the mitochondrion inner membrane. It carries out the reaction a ubiquinone + NADH + 5 H(+)(in) = a ubiquinol + NAD(+) + 4 H(+)(out). Core subunit of the mitochondrial membrane respiratory chain NADH dehydrogenase (Complex I) that is believed to belong to the minimal assembly required for catalysis. Complex I functions in the transfer of electrons from NADH to the respiratory chain. The immediate electron acceptor for the enzyme is believed to be ubiquinone. The chain is NADH-ubiquinone oxidoreductase chain 2 (mt:ND2) from Anopheles gambiae (African malaria mosquito).